The primary structure comprises 664 residues: Lamin tail domain-containing protein 2 (664 aa).

Residues M1–A40 are disordered. Positions Q118–Q169 form a coiled coil. A compositionally biased stretch (polar residues) spans S245 to L260. Disordered regions lie at residues S245–P272 and T286–H329. A compositionally biased stretch (low complexity) spans T286–S298. The segment covering G312 to Q325 has biased composition (polar residues). One can recognise an LTD domain in the interval P362 to P481. A disordered region spans residues S504–T563. Basic residues predominate over residues R533–S547.

The chain is Lamin tail domain-containing protein 2 (Lmntd2) from Mus musculus (Mouse).